A 280-amino-acid chain; its full sequence is Formyltetrahydrofolate deformylase (280 aa).

The 79-residue stretch at 8–86 folds into the ACT domain; the sequence is VLRTICPDQK…RELNPAGRRR (79 aa). Asp225 is an active-site residue.

This sequence belongs to the PurU family. Homohexamer.

The catalysed reaction is (6R)-10-formyltetrahydrofolate + H2O = (6S)-5,6,7,8-tetrahydrofolate + formate + H(+). It functions in the pathway purine metabolism; IMP biosynthesis via de novo pathway; formate from 10-formyl-5,6,7,8-tetrahydrofolate: step 1/1. Its activity is regulated as follows. Activated by methionine, inhibited by glycine. Catalyzes the hydrolysis of 10-formyltetrahydrofolate (formyl-FH4) to formate and tetrahydrofolate (FH4). Provides the major source of formate for the PurT-dependent synthesis of 5'-phosphoribosyl-N-formylglycinamide (FGAR) during aerobic growth. Has a role in regulating the one-carbon pool. The protein is Formyltetrahydrofolate deformylase of Escherichia coli (strain K12).